The following is a 101-amino-acid chain: MIQQERLLKVLKAPHISEKATKNAEKGNTIVFKVALDANKVEVANAVQELFEVKVDSVRTVVVKGKTKRHGARMGRRSDWKKAYVTLQEGQSLDFVEGAAE.

This sequence belongs to the universal ribosomal protein uL23 family. Part of the 50S ribosomal subunit. Contacts protein L29, and trigger factor when it is bound to the ribosome.

In terms of biological role, one of the early assembly proteins it binds 23S rRNA. One of the proteins that surrounds the polypeptide exit tunnel on the outside of the ribosome. Forms the main docking site for trigger factor binding to the ribosome. The protein is Large ribosomal subunit protein uL23 of Haemophilus ducreyi (strain 35000HP / ATCC 700724).